The sequence spans 329 residues: GMP reductase (329 aa).

The active-site Thioimidate intermediate is cysteine 178. Valine 207–valine 230 provides a ligand contact to NADP(+).

It belongs to the IMPDH/GMPR family. GuaC type 2 subfamily.

It carries out the reaction IMP + NH4(+) + NADP(+) = GMP + NADPH + 2 H(+). In terms of biological role, catalyzes the irreversible NADPH-dependent deamination of GMP to IMP. It functions in the conversion of nucleobase, nucleoside and nucleotide derivatives of G to A nucleotides, and in maintaining the intracellular balance of A and G nucleotides. The protein is GMP reductase of Lactococcus lactis subsp. cremoris (strain MG1363).